The chain runs to 183 residues: Small ribosomal subunit protein cS23y (183 aa).

Belongs to the chloroplast-specific ribosomal protein cS23 family. In terms of assembly, part of the 30S ribosomal subunit.

It localises to the plastid. The protein resides in the chloroplast. Component of the chloroplast ribosome (chloro-ribosome), a dedicated translation machinery responsible for the synthesis of chloroplast genome-encoded proteins, including proteins of the transcription and translation machinery and components of the photosynthetic apparatus. The sequence is that of Small ribosomal subunit protein cS23y from Arabidopsis thaliana (Mouse-ear cress).